Consider the following 444-residue polypeptide: C4-dicarboxylate transport protein (444 aa).

The next 9 helical transmembrane spans lie at 21–41 (HLYVQVLVAIAAGILLGHFYP), 57–77 (LVKMIIAPVIFLTVATGIAGM), 92–112 (IYFLTFSTLALIIGLIVANVV), 161–181 (GDILQVLFFSVLFGIALALVG), 201–221 (LVSILMKAAPIGAFGAMAFTI), 234–254 (LLIGTFYLTALLFVLVVLGAV), 320–340 (IYMTLAALFIAQATDIPLSLS), 345–365 (LLLVAMLSSKGAAGITGAGFI), and 368–388 (AATLSVVPAVPVAGMALILGI).

This sequence belongs to the dicarboxylate/amino acid:cation symporter (DAACS) (TC 2.A.23) family.

The protein localises to the cell inner membrane. Its function is as follows. Responsible for the transport of dicarboxylates such as succinate, fumarate, and malate from the periplasm across the membrane. In Brucella anthropi (strain ATCC 49188 / DSM 6882 / CCUG 24695 / JCM 21032 / LMG 3331 / NBRC 15819 / NCTC 12168 / Alc 37) (Ochrobactrum anthropi), this protein is C4-dicarboxylate transport protein.